Here is a 136-residue protein sequence, read N- to C-terminus: Large ribosomal subunit protein bL12 (136 aa).

It belongs to the bacterial ribosomal protein bL12 family. Homodimer. Part of the ribosomal stalk of the 50S ribosomal subunit. Forms a multimeric L10(L12)X complex, where L10 forms an elongated spine to which 2 to 4 L12 dimers bind in a sequential fashion. Binds GTP-bound translation factors.

Forms part of the ribosomal stalk which helps the ribosome interact with GTP-bound translation factors. Is thus essential for accurate translation. This chain is Large ribosomal subunit protein bL12, found in Synechococcus sp. (strain JA-2-3B'a(2-13)) (Cyanobacteria bacterium Yellowstone B-Prime).